The sequence spans 267 residues: X-box-binding protein 1 (267 aa).

At 1 to 180 (MVVVAAAPSA…VQAQLSPPQN (180 aa)) the chain is on the cytoplasmic side. A disordered region spans residues 35-60 (VPGPRAAGSEASGTPQARKRQRLTHL). Phosphoserine is present on Ser61. The 64-residue stretch at 63–126 (EEKALRRKLK…HGLVIENQEL (64 aa)) folds into the bZIP domain. A basic motif region spans residues 65-87 (KALRRKLKNRVAAQTARDRKKAR). A nuclear localization signal (NLS) region spans residues 69–85 (RKLKNRVAAQTARDRKK). A leucine-zipper region spans residues 91 to 126 (LEQQVVDLEEENQKLQLENQLLREKTHGLVIENQEL). Residues 181–198 (IFPWILTLLPLQILSLIS) form a helical; Signal-anchor for type II membrane protein membrane-spanning segment. The Lumenal segment spans residues 199–267 (FWAFWTSWTL…FVLTMYTPSL (69 aa)).

The protein belongs to the bZIP family. In terms of assembly, isoform 1 interacts with HM13. Isoform 1 interacts with RNF139; the interaction induces ubiquitination and degradation of isoform 1. Isoform 1 interacts (via luminal domain) with DERL1; the interaction obviates the need for ectodomain shedding prior HM13/SPP-mediated XBP1 isoform 1 cleavage. Isoform 1 interacts with HDAC3 and AKT1; the interactions occur in endothelial cell (EC) under disturbed flow. Isoform 1 interacts with the oncoprotein FOS. Interacts with SIRT1. Isoform 1 is ubiquitinated, leading to proteasome-mediated degradation in response to ER stress. Post-translationally, X-box-binding protein 1, cytoplasmic form and luminal form are produced by intramembrane proteolytic cleavage of ER membrane-anchored isoform 1 triggered by HM13/SPP in a DERL1-RNF139-dependent and VCP/p97-independent manner. X-box-binding protein 1, luminal form is ubiquitinated leading to proteasomal degradation. In terms of processing, acetylated by EP300; acetylation positively regulates the transcriptional activity of XBP1. Deacetylated by SIRT1; deacetylation negatively regulates the transcriptional activity of XBP1.

It localises to the nucleus. The protein resides in the endoplasmic reticulum. The protein localises to the cytoplasm. Its subcellular location is the endoplasmic reticulum membrane. It is found in the membrane. Functions as a transcription factor during endoplasmic reticulum (ER) stress by regulating the unfolded protein response (UPR). Required for cardiac myogenesis and hepatogenesis during embryonic development, and the development of secretory tissues such as exocrine pancreas and salivary gland. Involved in terminal differentiation of B lymphocytes to plasma cells and production of immunoglobulins. Modulates the cellular response to ER stress in a PIK3R-dependent manner. Binds to the cis-acting X box present in the promoter regions of major histocompatibility complex class II genes. Involved in VEGF-induced endothelial cell (EC) proliferation and retinal blood vessel formation during embryonic development but also for angiogenesis in adult tissues under ischemic conditions. Functions also as a major regulator of the UPR in obesity-induced insulin resistance and type 2 diabetes for the management of obesity and diabetes prevention. In terms of biological role, acts as a weak transcriptional factor. Together with HDAC3, contributes to the activation of NFE2L2-mediated HMOX1 transcription factor gene expression in a PI(3)K/mTORC2/Akt-dependent signaling pathway leading to EC survival under disturbed flow/oxidative stress. Binds to the ER stress response element (ERSE) upon ER stress. Binds to the consensus 5'-GATGACGTG[TG]N(3)[AT]T-3' sequence related to cAMP responsive element (CRE)-like sequences. Associates preferentially to the HDAC3 gene promoter region in a static flow-dependent manner. Binds to the CDH5/VE-cadherin gene promoter region. The sequence is that of X-box-binding protein 1 from Rattus norvegicus (Rat).